Consider the following 300-residue polypeptide: Sulfate adenylyltransferase subunit 2 (300 aa).

The tract at residues 281 to 300 (RAIDRDEAGSMEKKKREGYF) is disordered.

The protein belongs to the PAPS reductase family. CysD subfamily. In terms of assembly, heterodimer composed of CysD, the smaller subunit, and CysN.

The enzyme catalyses sulfate + ATP + H(+) = adenosine 5'-phosphosulfate + diphosphate. It participates in sulfur metabolism; hydrogen sulfide biosynthesis; sulfite from sulfate: step 1/3. In terms of biological role, with CysN forms the ATP sulfurylase (ATPS) that catalyzes the adenylation of sulfate producing adenosine 5'-phosphosulfate (APS) and diphosphate, the first enzymatic step in sulfur assimilation pathway. APS synthesis involves the formation of a high-energy phosphoric-sulfuric acid anhydride bond driven by GTP hydrolysis by CysN coupled to ATP hydrolysis by CysD. The sequence is that of Sulfate adenylyltransferase subunit 2 from Brucella melitensis biotype 2 (strain ATCC 23457).